A 159-amino-acid chain; its full sequence is Transcriptional repressor NrdR (159 aa).

The interval Met-1 to Asp-21 is disordered. A zinc finger lies at Cys-3–Cys-34. The 91-residue stretch at Leu-49–Glu-139 folds into the ATP-cone domain.

It belongs to the NrdR family. The cofactor is Zn(2+).

Negatively regulates transcription of bacterial ribonucleotide reductase nrd genes and operons by binding to NrdR-boxes. The chain is Transcriptional repressor NrdR from Streptococcus thermophilus (strain ATCC BAA-491 / LMD-9).